A 222-amino-acid polypeptide reads, in one-letter code: N-(5'-phosphoribosyl)anthranilate isomerase (222 aa).

This sequence belongs to the TrpF family.

It carries out the reaction N-(5-phospho-beta-D-ribosyl)anthranilate = 1-(2-carboxyphenylamino)-1-deoxy-D-ribulose 5-phosphate. It functions in the pathway amino-acid biosynthesis; L-tryptophan biosynthesis; L-tryptophan from chorismate: step 3/5. The chain is N-(5'-phosphoribosyl)anthranilate isomerase from Xanthomonas euvesicatoria pv. vesicatoria (strain 85-10) (Xanthomonas campestris pv. vesicatoria).